A 1124-amino-acid polypeptide reads, in one-letter code: Phytochrome A1 (1124 aa).

Low complexity predominate over residues 1–14 (MSSSRPSQSSTTSA). The disordered stretch occupies residues 1–20 (MSSSRPSQSSTTSARSKHSA). Positions 218–401 (SMERLCDTMV…VFAIHVNKEL (184 aa)) constitute a GAF domain. Phytochromobilin is bound at residue Cys-323. A PAS 1 domain is found at 617-687 (VTAEMVRLIE…KMLELALQGK (71 aa)). The region spanning 690-746 (RNVEFEIKTHGPSGDSSPISLIVNACASRDVGDSVVGVCFIAQDITGQKNIMDKFTR) is the PAC domain. The PAS 2 domain occupies 747 to 821 (IEGDYRAIIQ…KNQEAFVNFG (75 aa)). The region spanning 901–1118 (YIRRQIRNPL…TFIISVELAV (218 aa)) is the Histidine kinase domain.

The protein belongs to the phytochrome family. Homodimer. In terms of processing, contains one covalently linked phytochromobilin chromophore.

In terms of biological role, regulatory photoreceptor which exists in two forms that are reversibly interconvertible by light: the Pr form that absorbs maximally in the red region of the spectrum and the Pfr form that absorbs maximally in the far-red region. Photoconversion of Pr to Pfr induces an array of morphogenic responses, whereas reconversion of Pfr to Pr cancels the induction of those responses. Pfr controls the expression of a number of nuclear genes including those encoding the small subunit of ribulose-bisphosphate carboxylase, chlorophyll A/B binding protein, protochlorophyllide reductase, rRNA, etc. It also controls the expression of its own gene(s) in a negative feedback fashion. In Nicotiana tabacum (Common tobacco), this protein is Phytochrome A1 (PHYA1).